Reading from the N-terminus, the 194-residue chain is Xanthine phosphoribosyltransferase (194 aa).

2 residues coordinate xanthine: Leu20 and Asn27. 128 to 132 contacts 5-phospho-alpha-D-ribose 1-diphosphate; the sequence is ANGQA. Residue Lys156 coordinates xanthine.

This sequence belongs to the purine/pyrimidine phosphoribosyltransferase family. Xpt subfamily. In terms of assembly, homodimer.

The protein localises to the cytoplasm. The catalysed reaction is XMP + diphosphate = xanthine + 5-phospho-alpha-D-ribose 1-diphosphate. Its pathway is purine metabolism; XMP biosynthesis via salvage pathway; XMP from xanthine: step 1/1. In terms of biological role, converts the preformed base xanthine, a product of nucleic acid breakdown, to xanthosine 5'-monophosphate (XMP), so that it can be reused for RNA or DNA synthesis. The polypeptide is Xanthine phosphoribosyltransferase (xpt) (Bacillus subtilis (strain 168)).